Consider the following 140-residue polypeptide: Large ribosomal subunit protein uL14 (140 aa).

Belongs to the universal ribosomal protein uL14 family.

In Caenorhabditis elegans, this protein is Large ribosomal subunit protein uL14 (rpl-23).